Consider the following 179-residue polypeptide: Lipoprotein signal peptidase (179 aa).

4 helical membrane passes run leucine 10–isoleucine 30, valine 48–phenylalanine 68, tryptophan 75–leucine 95, and asparagine 101–isoleucine 121. Residues aspartate 131 and aspartate 149 contribute to the active site. The chain crosses the membrane as a helical span at residues histidine 141 to isoleucine 161.

It belongs to the peptidase A8 family.

The protein resides in the cell inner membrane. It catalyses the reaction Release of signal peptides from bacterial membrane prolipoproteins. Hydrolyzes -Xaa-Yaa-Zaa-|-(S,diacylglyceryl)Cys-, in which Xaa is hydrophobic (preferably Leu), and Yaa (Ala or Ser) and Zaa (Gly or Ala) have small, neutral side chains.. Its pathway is protein modification; lipoprotein biosynthesis (signal peptide cleavage). This protein specifically catalyzes the removal of signal peptides from prolipoproteins. In Acinetobacter baylyi (strain ATCC 33305 / BD413 / ADP1), this protein is Lipoprotein signal peptidase.